Here is a 141-residue protein sequence, read N- to C-terminus: Hemoglobin subunit mu (141 aa).

In terms of domain architecture, Globin spans 1–141 (MLSAQERAQI…VAVVLTEKYR (141 aa)). Heme b is bound by residues H58 and H87.

Belongs to the globin family. Expressed in erythroid tissues.

The sequence is that of Hemoglobin subunit mu (HBM) from Homo sapiens (Human).